A 461-amino-acid polypeptide reads, in one-letter code: Cysteine--tRNA ligase (461 aa).

C28 is a binding site for Zn(2+). The 'HIGH' region signature appears at 30-40; the sequence is ITVYDLCHIGH. Positions 209, 234, and 238 each coordinate Zn(2+). A 'KMSKS' region motif is present at residues 266–270; that stretch reads KMSKS. Residue K269 coordinates ATP.

Belongs to the class-I aminoacyl-tRNA synthetase family. As to quaternary structure, monomer. Zn(2+) is required as a cofactor.

The protein resides in the cytoplasm. The catalysed reaction is tRNA(Cys) + L-cysteine + ATP = L-cysteinyl-tRNA(Cys) + AMP + diphosphate. The protein is Cysteine--tRNA ligase of Enterobacter sp. (strain 638).